The primary structure comprises 219 residues: Carbonic anhydrase 1 (219 aa).

Zn(2+) contacts are provided by Cys39, Asp41, His98, and Cys101.

Belongs to the beta-class carbonic anhydrase family. Oligomer. Zn(2+) serves as cofactor.

The catalysed reaction is hydrogencarbonate + H(+) = CO2 + H2O. In terms of biological role, reversible hydration of carbon dioxide. Carbon dioxide formed in the bicarbonate-dependent decomposition of cyanate by cyanase (CynS) diffuses out of the cell faster than it would be hydrated to bicarbonate, so the apparent function of this enzyme is to catalyze the hydration of carbon dioxide and thus prevent depletion of cellular bicarbonate. In Escherichia coli O157:H7, this protein is Carbonic anhydrase 1 (cynT).